A 108-amino-acid chain; its full sequence is U-scoloptoxin(16)-Er10a (108 aa).

The signal sequence occupies residues 1-24; the sequence is MASFTSFCVLFTFCLLLLAHQARS.

Belongs to the scoloptoxin-16 family. Contains 4 disulfide bonds. As to expression, expressed by the venom gland.

It is found in the secreted. This chain is U-scoloptoxin(16)-Er10a, found in Ethmostigmus rubripes (Giant centipede).